Reading from the N-terminus, the 337-residue chain is Protein-arginine kinase (337 aa).

The 232-residue stretch at 8–239 folds into the Phosphagen kinase C-terminal domain; sequence VVLSSRIRLA…KQIISSERRA (232 aa). ATP contacts are provided by residues 11 to 15, His76, Arg110, 161 to 165, and 192 to 197; these read SSRIR, RASVM, and RGIYGE. The RDXXRA motif of the pArg binding pocket involved in allosteric regulation motif lies at 321–326; sequence RDVKRA.

This sequence belongs to the ATP:guanido phosphotransferase family.

The catalysed reaction is L-arginyl-[protein] + ATP = N(omega)-phospho-L-arginyl-[protein] + ADP + H(+). With respect to regulation, appears to be allosterically activated by the binding of pArg-containing polypeptides to the pArg-binding pocket localized in the C-terminal domain of McsB. Its function is as follows. Catalyzes the specific phosphorylation of arginine residues in proteins. The polypeptide is Protein-arginine kinase (Caldanaerobacter subterraneus subsp. tengcongensis (strain DSM 15242 / JCM 11007 / NBRC 100824 / MB4) (Thermoanaerobacter tengcongensis)).